Consider the following 180-residue polypeptide: ATP synthase subunit delta (180 aa).

This sequence belongs to the ATPase delta chain family. As to quaternary structure, F-type ATPases have 2 components, F(1) - the catalytic core - and F(0) - the membrane proton channel. F(1) has five subunits: alpha(3), beta(3), gamma(1), delta(1), epsilon(1). CF(0) has four main subunits: a(1), b(1), b'(1) and c(10-14). The alpha and beta chains form an alternating ring which encloses part of the gamma chain. F(1) is attached to F(0) by a central stalk formed by the gamma and epsilon chains, while a peripheral stalk is formed by the delta, b and b' chains.

It is found in the cellular thylakoid membrane. Its function is as follows. F(1)F(0) ATP synthase produces ATP from ADP in the presence of a proton or sodium gradient. F-type ATPases consist of two structural domains, F(1) containing the extramembraneous catalytic core and F(0) containing the membrane proton channel, linked together by a central stalk and a peripheral stalk. During catalysis, ATP synthesis in the catalytic domain of F(1) is coupled via a rotary mechanism of the central stalk subunits to proton translocation. In terms of biological role, this protein is part of the stalk that links CF(0) to CF(1). It either transmits conformational changes from CF(0) to CF(1) or is implicated in proton conduction. This Prochlorococcus marinus (strain MIT 9301) protein is ATP synthase subunit delta.